A 303-amino-acid chain; its full sequence is Glycine betaine/carnitine/choline-binding protein OpuCC (303 aa).

Residues 1–20 form the signal peptide; that stretch reads MTKIKWLGAFALVFVMLLGG. Cys-21 carries N-palmitoyl cysteine lipidation. Cys-21 carries S-diacylglycerol cysteine lipidation.

Belongs to the OsmX family. As to quaternary structure, the complex is composed of two ATP-binding proteins (OpuCA), two transmembrane proteins (OpuCB and OpuCD) and a solute-binding protein (OpuCC).

It is found in the cell membrane. Functionally, member of a high affinity multicomponent binding-protein-dependent transport system for glycine betaine, carnitine, and choline. In Bacillus subtilis (strain 168), this protein is Glycine betaine/carnitine/choline-binding protein OpuCC (opuCC).